The sequence spans 668 residues: tRNA 5-methylaminomethyl-2-thiouridine biosynthesis bifunctional protein MnmC (668 aa).

The tract at residues 1–245 is tRNA (mnm(5)s(2)U34)-methyltransferase; sequence MKHYSIQPAN…KREMLCGVME (245 aa). An FAD-dependent cmnm(5)s(2)U34 oxidoreductase region spans residues 270-668; it reads IGGGIASALL…LLKGKAVKAG (399 aa).

In the N-terminal section; belongs to the methyltransferase superfamily. tRNA (mnm(5)s(2)U34)-methyltransferase family. This sequence in the C-terminal section; belongs to the DAO family. The cofactor is FAD.

The protein localises to the cytoplasm. It carries out the reaction 5-aminomethyl-2-thiouridine(34) in tRNA + S-adenosyl-L-methionine = 5-methylaminomethyl-2-thiouridine(34) in tRNA + S-adenosyl-L-homocysteine + H(+). Catalyzes the last two steps in the biosynthesis of 5-methylaminomethyl-2-thiouridine (mnm(5)s(2)U) at the wobble position (U34) in tRNA. Catalyzes the FAD-dependent demodification of cmnm(5)s(2)U34 to nm(5)s(2)U34, followed by the transfer of a methyl group from S-adenosyl-L-methionine to nm(5)s(2)U34, to form mnm(5)s(2)U34. In Escherichia coli (strain K12 / DH10B), this protein is tRNA 5-methylaminomethyl-2-thiouridine biosynthesis bifunctional protein MnmC.